The following is a 131-amino-acid chain: MYKIVPDTNFLIYVFKHKINFDYEIERALNTKFEIVILSPIKEELERLLKSRDLKGKEKLAVNLALAKIKNYKLVDYTANYADEAILNYAKENENVIVATNDKELKEKLMENNIPVMVVRQKKYFEIFGMV.

One can recognise a PINc domain in the interval 4-106; sequence IVPDTNFLIY…IVATNDKELK (103 aa). Asp-7 and Asp-102 together coordinate Mg(2+).

Belongs to the PINc/VapC protein family. Mg(2+) is required as a cofactor.

In terms of biological role, toxic component of a type II toxin-antitoxin (TA) system. An RNase. Its cognate antitoxin is VapB4. The sequence is that of Ribonuclease VapC4 from Methanocaldococcus jannaschii (strain ATCC 43067 / DSM 2661 / JAL-1 / JCM 10045 / NBRC 100440) (Methanococcus jannaschii).